The sequence spans 306 residues: Formamidopyrimidine-DNA glycosylase (306 aa).

The active-site Schiff-base intermediate with DNA is proline 2. The Proton donor role is filled by glutamate 3. Residue lysine 58 is the Proton donor; for beta-elimination activity of the active site. 3 residues coordinate DNA: histidine 114, arginine 136, and lysine 179. The segment at 270–306 (SVYDREGEACRTSGCRGTVERIVQAGRSTFYCPHCQK) adopts an FPG-type zinc-finger fold. The active-site Proton donor; for delta-elimination activity is arginine 296.

This sequence belongs to the FPG family. In terms of assembly, monomer. Requires Zn(2+) as cofactor.

It carries out the reaction Hydrolysis of DNA containing ring-opened 7-methylguanine residues, releasing 2,6-diamino-4-hydroxy-5-(N-methyl)formamidopyrimidine.. The enzyme catalyses 2'-deoxyribonucleotide-(2'-deoxyribose 5'-phosphate)-2'-deoxyribonucleotide-DNA = a 3'-end 2'-deoxyribonucleotide-(2,3-dehydro-2,3-deoxyribose 5'-phosphate)-DNA + a 5'-end 5'-phospho-2'-deoxyribonucleoside-DNA + H(+). In terms of biological role, involved in base excision repair of DNA damaged by oxidation or by mutagenic agents. Acts as a DNA glycosylase that recognizes and removes damaged bases. Has a preference for oxidized purines, such as 7,8-dihydro-8-oxoguanine (8-oxoG). Has AP (apurinic/apyrimidinic) lyase activity and introduces nicks in the DNA strand. Cleaves the DNA backbone by beta-delta elimination to generate a single-strand break at the site of the removed base with both 3'- and 5'-phosphates. The sequence is that of Formamidopyrimidine-DNA glycosylase from Sinorhizobium medicae (strain WSM419) (Ensifer medicae).